Consider the following 248-residue polypeptide: Glutathione S-transferase omega-2 (248 aa).

Residues 22-101 form the GST N-terminal domain; the sequence is GVIRIYSMRF…YLDDVYPGRK (80 aa). Cys-32 acts as the Nucleophile in catalysis. Glutathione contacts are provided by residues Lys-59, Ile-72, and 85-86; that span reads ES. The region spanning 106–231 is the GST C-terminal domain; the sequence is DPYERARQKM…VFLGFLNLYF (126 aa).

The protein belongs to the GST superfamily. Omega family.

It catalyses the reaction RX + glutathione = an S-substituted glutathione + a halide anion + H(+). The catalysed reaction is L-dehydroascorbate + 2 glutathione = glutathione disulfide + L-ascorbate. The enzyme catalyses methylarsonate + 2 glutathione + H(+) = methylarsonous acid + glutathione disulfide + H2O. In terms of biological role, exhibits glutathione-dependent thiol transferase activity. Has high dehydroascorbate reductase activity and may contribute to the recycling of ascorbic acid. Participates in the biotransformation of inorganic arsenic and reduces monomethylarsonic acid (MMA). The protein is Glutathione S-transferase omega-2 (Gsto2) of Mus musculus (Mouse).